We begin with the raw amino-acid sequence, 159 residues long: Fimbrial protein EcpB (159 aa).

The propeptide at 1–6 is leader sequence; that stretch reads MYKQKG. Phenylalanine 7 carries the N-methylphenylalanine modification. A helical membrane pass occupies residues 7 to 29; sequence FTLIELMIVIAIIGILAAIALPL. A disulfide bond links cysteine 137 and cysteine 156.

Belongs to the N-Me-Phe pilin family.

The protein resides in the fimbrium. Its subcellular location is the membrane. This chain is Fimbrial protein EcpB (ecpB), found in Eikenella corrodens.